The primary structure comprises 646 residues: MISLTPSLFLNKTVVPGCSTRLSLRQPRTIITPPASLRVFSSLGSNQDPTGSVLIETTATSSSSLETSAADIVPKSTVSGGVQDVYGEDAATEDMPITPWSLSVASGYTLLRDPHHNKGLAFSHRERDAHYLRGLLPPTVISQDLQVKKIMHTLRQYQVPLQKYMAMMDLQETNERLFYKLLIDHVEELLPVIYTPTVGEACQKYGSIFLRPQGLFISLKEKGKIHEVLRNWPEKNIQVIVVTDGERILGLGDLGCQGMGIPVGKLSLYTALGGVRPSACLPVTIDVGTNNEKLLNDEFYIGLRQRRATGEEYSELMHEFMTAVKQNYGEKVVIQFEDFANHNAFDLLAKYGTTHLVFNDDIQGTASVVLAGLIAALRFVGGSLSDHRFLFLGAGEAGTGIAELIALEISKKSHIPLEEARKNIWLVDSKGLIVSSRKESIQHFKKPWAHDHEPIRELVDAVKAIKPTVLIGTSGVGQTFTQDVVETMAKLNEKPIILSLSNPTSQSECTAEEAYTWSQGRAIFASGSPFAPVEYEGKTFVPGQANNAYIFPGFGLGLIMSGTIRVHDDMLLAASEALAEELMEEHYEKGMIYPPFRNIRKISARIAAKVAAKAYELGLATRLPQPKELEQCAESSMYSPSYRSYR.

The N-terminal 74 residues, 1-74, are a transit peptide targeting the chloroplast; the sequence is MISLTPSLFL…LETSAADIVP (74 aa). Tyr-194 acts as the Proton donor in catalysis. Arg-247 contacts NADP(+). Residue Lys-265 is the Proton acceptor of the active site. Positions 337, 338, and 361 each coordinate a divalent metal cation. NADP(+) is bound by residues Asp-361, 390 to 406, and Asn-502; that span reads LFLG…ELIA.

The protein belongs to the malic enzymes family. As to quaternary structure, homodimer and homotetramer. It depends on Mg(2+) as a cofactor. The cofactor is Mn(2+). Expressed in leaves, stems, flowers and roots, mainly in vascular system. In roots, present in the stele, including the vascular tissue and the pericycle, mainly at emerging lateral roots and at root tips.

It localises to the plastid. The protein localises to the chloroplast. It catalyses the reaction (S)-malate + NADP(+) = pyruvate + CO2 + NADPH. The enzyme catalyses oxaloacetate + H(+) = pyruvate + CO2. It functions in the pathway photosynthesis; C3 acid pathway. In terms of biological role, the chloroplastic ME isoform decarboxylates malate shuttled from neighboring mesophyll cells. The CO(2) released is then refixed by ribulose-bisphosphate carboxylase. This pathway eliminates the photorespiratory loss of CO(2) that occurs in most plants. In Arabidopsis thaliana (Mouse-ear cress), this protein is NADP-dependent malic enzyme 4, chloroplastic (NADP-ME4).